A 419-amino-acid polypeptide reads, in one-letter code: Imidazolonepropionase (419 aa).

Fe(3+) is bound by residues H84 and H86. Zn(2+) contacts are provided by H84 and H86. Residues R93, Y156, and H189 each coordinate 4-imidazolone-5-propanoate. Y156 lines the N-formimidoyl-L-glutamate pocket. H254 contributes to the Fe(3+) binding site. H254 contacts Zn(2+). Q257 contacts 4-imidazolone-5-propanoate. D329 serves as a coordination point for Fe(3+). D329 serves as a coordination point for Zn(2+). Residues N331 and G333 each coordinate N-formimidoyl-L-glutamate. T334 provides a ligand contact to 4-imidazolone-5-propanoate.

The protein belongs to the metallo-dependent hydrolases superfamily. HutI family. In terms of assembly, monomer. Forms a tightly packed homodimer in the crystal, but this seems to be an artifact of crystallization. Requires Zn(2+) as cofactor. Fe(3+) is required as a cofactor.

Its subcellular location is the cytoplasm. It carries out the reaction 4-imidazolone-5-propanoate + H2O = N-formimidoyl-L-glutamate. It participates in amino-acid degradation; L-histidine degradation into L-glutamate; N-formimidoyl-L-glutamate from L-histidine: step 3/3. Catalyzes the hydrolytic cleavage of the carbon-nitrogen bond in imidazolone-5-propanoate to yield N-formimidoyl-L-glutamate. It is the third step in the universal histidine degradation pathway. The sequence is that of Imidazolonepropionase from Agrobacterium fabrum (strain C58 / ATCC 33970) (Agrobacterium tumefaciens (strain C58)).